A 358-amino-acid chain; its full sequence is Leukotriene B4 receptor 2 (358 aa).

Residues 1–24 (MSVCYRPPGNETLLSWKTSRATGT) are Extracellular-facing. N10 carries N-linked (GlcNAc...) asparagine glycosylation. The chain crosses the membrane as a helical span at residues 25–45 (AFLLLAALLGLPGNGFVVWSL). Residues 46-60 (AGWRPARGRPLAATL) are Cytoplasmic-facing. The chain crosses the membrane as a helical span at residues 61 to 81 (VLHLALADGAVLLLTPLFVAF). The Extracellular segment spans residues 82–96 (LTRQAWPLGQAGCKA). A helical transmembrane segment spans residues 97–117 (VYYVCALSMYASVLLTGLLSL). The Cytoplasmic segment spans residues 118–140 (QRCLAVTRPFLAPRLRSPALARR). The chain crosses the membrane as a helical span at residues 141–161 (LLLAVWLAALLLAVPAAVYRH). At 162–185 (LWRDRVCQLCHPSPVHAAAHLSLE) the chain is on the extracellular side. Residues 186–206 (TLTAFVLPFGLMLGCYSVTLA) form a helical membrane-spanning segment. Residues 207–224 (RLRGARWGSGRHGARVGR) lie on the Cytoplasmic side of the membrane. A helical membrane pass occupies residues 225-245 (LVSAIVLAFGLLWAPYHAVNL). At 246-275 (LQAVAALAPPEGALAKLGGAGQAARAGTTA) the chain is on the extracellular side. The helical transmembrane segment at 276-296 (LAFFSSSVNPVLYVFTAGDLL) threads the bilayer. Residues 297-358 (PRAGPRFLTR…MEKDGPEWDL (62 aa)) are Cytoplasmic-facing. A disordered region spans residues 311–358 (SGEARGGGRSREGTMELRTTPQLKVVGQGRGNGDPGGGMEKDGPEWDL). Gly residues predominate over residues 338–348 (QGRGNGDPGGG). The span at 349 to 358 (MEKDGPEWDL) shows a compositional bias: basic and acidic residues.

Belongs to the G-protein coupled receptor 1 family. Widely expressed.

The protein resides in the cell membrane. In terms of biological role, low-affinity receptor for leukotrienes including leukotriene B4. Mediates chemotaxis of granulocytes and macrophages. The response is mediated via G-proteins that activate a phosphatidylinositol-calcium second messenger system. The rank order of affinities for the leukotrienes is LTB4 &gt; 12-epi-LTB4 &gt; LTB5 &gt; LTB3. This is Leukotriene B4 receptor 2 (LTB4R2) from Homo sapiens (Human).